The following is a 272-amino-acid chain: Ribonuclease HII (272 aa).

One can recognise an RNase H type-2 domain in the interval 30 to 221 (GPVAGVDEVG…VRRAAEATGV (192 aa)). Residues Asp-36, Glu-37, and Asp-130 each coordinate a divalent metal cation.

Belongs to the RNase HII family. Mn(2+) serves as cofactor. Mg(2+) is required as a cofactor.

The protein localises to the cytoplasm. It carries out the reaction Endonucleolytic cleavage to 5'-phosphomonoester.. Functionally, endonuclease that specifically degrades the RNA of RNA-DNA hybrids. The polypeptide is Ribonuclease HII (Mycolicibacterium smegmatis (strain ATCC 700084 / mc(2)155) (Mycobacterium smegmatis)).